Reading from the N-terminus, the 317-residue chain is Enoyl-CoA delta isomerase 3, peroxisomal (317 aa).

Residues Met1–Ala46 form the ACB domain. The segment at Leu40 to Glu60 is disordered. Ser120–Leu124 is a substrate binding site. Residues Ala315 to Leu317 carry the Microbody targeting signal motif.

The protein belongs to the enoyl-CoA hydratase/isomerase family. In terms of tissue distribution, expressed at high levels in the kidney. Also detected at very low levels in the duodenum, jejunum, ileum, heart, liver, lung, and brown adipose tissue (at protein level). In the kidney, expression seems to be localized mainly to the proximal tubule.

The protein resides in the peroxisome. It catalyses the reaction a (3Z)-enoyl-CoA = a 4-saturated (2E)-enoyl-CoA. It carries out the reaction a (3E)-enoyl-CoA = a 4-saturated (2E)-enoyl-CoA. The enzyme catalyses (3E)-nonenoyl-CoA = (2E)-nonenoyl-CoA. Its function is as follows. Catalyzes the isomerization of trans-3-nonenoyl-CoA into trans-2-nonenoyl-CoA. May also have activity towards other enoyl-CoA species. This chain is Enoyl-CoA delta isomerase 3, peroxisomal, found in Mus musculus (Mouse).